The chain runs to 31 residues: GCIPVGSMCTISNGCCTKNCGWNFHCNKPNQ.

Intrachain disulfides connect Cys2-Cys16, Cys9-Cys20, and Cys15-Cys26. Pro29 is modified (4-hydroxyproline).

It belongs to the nemertide family. Confined to the epidermis and to the mucus layer.

It is found in the secreted. In terms of biological role, potent toxin, demonstrating strong inhibitory effects on insect sodium channels (Nav) and reduced activity on mammalian sodium channels. Potently inhibits inactivation of insect sodium channels of B.germanica (BgNav1) (EC(50)=9.5 nM). The toxin also delays the inactivation of most mammalian Nav (human Nav1.1/SCN1A; EC(50)=171.5 nM, rat Nav1.2/SCN2A; EC(50)=50.4 nM, rat Nav1.3/SCN3A; EC(50)=170.2 nM, rat Nav1.4/SCN4A; EC(50)=810.6 nM, human Nav1.5/SCN5A; EC(50)=155.6 nM, mouse Nav1.6/SCN8A; EC(50)=147.6 nM, human Nav1.9/SCN9A; EC(50)=129 nM). Inactivation is completely prevented by a concentration of 1 uM, resulting in sustained, non-inactivating currents. In addition, the toxin significantly enhances the recovery from inactivation, and the open state is not required for the toxin to interact with the channel. In vivo, injection into brine shrimp (Artemia salina) stops movement or causes death after 24 hours (EC(50)=6.1 uM). In Lineus ruber (Red bootlace), this protein is Nemertide alpha-7.